Here is a 382-residue protein sequence, read N- to C-terminus: Heme A synthase (382 aa).

Transmembrane regions (helical) follow at residues 25–45 (GAVR…VAVG), 112–132 (LLGR…WARG), 141–161 (GLLG…IMVA), 176–196 (LALH…LAAG), 211–231 (VVAC…GLVA), 270–290 (LALV…VAIA), 303–323 (AAAG…GLGI), and 327–347 (LLHV…AVLI). His277 contacts heme. His338 lines the heme pocket.

It belongs to the COX15/CtaA family. Type 2 subfamily. In terms of assembly, interacts with CtaB. It depends on heme b as a cofactor.

Its subcellular location is the cell membrane. It catalyses the reaction Fe(II)-heme o + 2 A + H2O = Fe(II)-heme a + 2 AH2. It participates in porphyrin-containing compound metabolism; heme A biosynthesis; heme A from heme O: step 1/1. Catalyzes the conversion of heme O to heme A by two successive hydroxylations of the methyl group at C8. The first hydroxylation forms heme I, the second hydroxylation results in an unstable dihydroxymethyl group, which spontaneously dehydrates, resulting in the formyl group of heme A. The chain is Heme A synthase from Methylorubrum extorquens (strain CM4 / NCIMB 13688) (Methylobacterium extorquens).